We begin with the raw amino-acid sequence, 860 residues long: Leucine--tRNA ligase (860 aa).

The 'HIGH' region signature appears at 42 to 52; that stretch reads PYPSGRLHMGH. A 'KMSKS' region motif is present at residues 619-623; that stretch reads KMSKS. Residue K622 coordinates ATP.

This sequence belongs to the class-I aminoacyl-tRNA synthetase family.

It localises to the cytoplasm. The catalysed reaction is tRNA(Leu) + L-leucine + ATP = L-leucyl-tRNA(Leu) + AMP + diphosphate. The protein is Leucine--tRNA ligase of Shigella sonnei (strain Ss046).